Consider the following 340-residue polypeptide: S-adenosylmethionine:tRNA ribosyltransferase-isomerase (340 aa).

It belongs to the QueA family. As to quaternary structure, monomer.

The protein resides in the cytoplasm. The catalysed reaction is 7-aminomethyl-7-carbaguanosine(34) in tRNA + S-adenosyl-L-methionine = epoxyqueuosine(34) in tRNA + adenine + L-methionine + 2 H(+). It functions in the pathway tRNA modification; tRNA-queuosine biosynthesis. Transfers and isomerizes the ribose moiety from AdoMet to the 7-aminomethyl group of 7-deazaguanine (preQ1-tRNA) to give epoxyqueuosine (oQ-tRNA). The sequence is that of S-adenosylmethionine:tRNA ribosyltransferase-isomerase from Chromobacterium violaceum (strain ATCC 12472 / DSM 30191 / JCM 1249 / CCUG 213 / NBRC 12614 / NCIMB 9131 / NCTC 9757 / MK).